The chain runs to 255 residues: 5'-methylthioadenosine/S-adenosylhomocysteine nucleosidase (255 aa).

Glu14 (proton acceptor) is an active-site residue. Substrate contacts are provided by residues Gly80, Leu176, and 196 to 197 (ME). Asp220 functions as the Proton donor in the catalytic mechanism.

It belongs to the PNP/UDP phosphorylase family. MtnN subfamily.

It catalyses the reaction S-adenosyl-L-homocysteine + H2O = S-(5-deoxy-D-ribos-5-yl)-L-homocysteine + adenine. It carries out the reaction S-methyl-5'-thioadenosine + H2O = 5-(methylsulfanyl)-D-ribose + adenine. The enzyme catalyses 5'-deoxyadenosine + H2O = 5-deoxy-D-ribose + adenine. It participates in amino-acid biosynthesis; L-methionine biosynthesis via salvage pathway; S-methyl-5-thio-alpha-D-ribose 1-phosphate from S-methyl-5'-thioadenosine (hydrolase route): step 1/2. In terms of biological role, catalyzes the irreversible cleavage of the glycosidic bond in both 5'-methylthioadenosine (MTA) and S-adenosylhomocysteine (SAH/AdoHcy) to adenine and the corresponding thioribose, 5'-methylthioribose and S-ribosylhomocysteine, respectively. Also cleaves 5'-deoxyadenosine, a toxic by-product of radical S-adenosylmethionine (SAM) enzymes, into 5-deoxyribose and adenine. The chain is 5'-methylthioadenosine/S-adenosylhomocysteine nucleosidase (mtnN) from Mycobacterium bovis (strain ATCC BAA-935 / AF2122/97).